The primary structure comprises 1126 residues: Carbamoyl phosphate synthase large chain (1126 aa).

Residues 1-402 (MPKRTDIKSV…SLGKAMRSID (402 aa)) form a carboxyphosphate synthetic domain region. Arginine 129, arginine 169, glycine 175, glycine 176, glutamate 208, isoleucine 210, glutamate 215, glycine 241, valine 242, histidine 243, glutamine 285, and glutamate 299 together coordinate ATP. The 196-residue stretch at 133–328 (KKVVEEAGAE…IAKIATKLAL (196 aa)) folds into the ATP-grasp 1 domain. Residues glutamine 285, glutamate 299, and asparagine 301 each coordinate Mg(2+). Residues glutamine 285, glutamate 299, and asparagine 301 each coordinate Mn(2+). The tract at residues 403-551 (KRHMGFNWDG…YYYSCYADET (149 aa)) is oligomerization domain. The segment at 552–962 (ELRPRDREAV…AFAKSQLAAY (411 aa)) is carbamoyl phosphate synthetic domain. The ATP-grasp 2 domain maps to 681–881 (GEVLKKADMN…LAKAAARIMV (201 aa)). ATP contacts are provided by arginine 717, lysine 765, leucine 767, glutamate 772, glycine 797, valine 798, histidine 799, serine 800, glutamine 840, and glutamate 852. Mg(2+) is bound by residues glutamine 840, glutamate 852, and asparagine 854. Glutamine 840, glutamate 852, and asparagine 854 together coordinate Mn(2+). Residues 963 to 1126 (EGGLPTSGNV…TQLFELESRD (164 aa)) form an allosteric domain region. Residues 964–1126 (GGLPTSGNVF…TQLFELESRD (163 aa)) form the MGS-like domain.

It belongs to the CarB family. Composed of two chains; the small (or glutamine) chain promotes the hydrolysis of glutamine to ammonia, which is used by the large (or ammonia) chain to synthesize carbamoyl phosphate. Tetramer of heterodimers (alpha,beta)4. Requires Mg(2+) as cofactor. Mn(2+) serves as cofactor.

The enzyme catalyses hydrogencarbonate + L-glutamine + 2 ATP + H2O = carbamoyl phosphate + L-glutamate + 2 ADP + phosphate + 2 H(+). It catalyses the reaction hydrogencarbonate + NH4(+) + 2 ATP = carbamoyl phosphate + 2 ADP + phosphate + 2 H(+). The protein operates within amino-acid biosynthesis; L-arginine biosynthesis; carbamoyl phosphate from bicarbonate: step 1/1. Its pathway is pyrimidine metabolism; UMP biosynthesis via de novo pathway; (S)-dihydroorotate from bicarbonate: step 1/3. Its function is as follows. Large subunit of the glutamine-dependent carbamoyl phosphate synthetase (CPSase). CPSase catalyzes the formation of carbamoyl phosphate from the ammonia moiety of glutamine, carbonate, and phosphate donated by ATP, constituting the first step of 2 biosynthetic pathways, one leading to arginine and/or urea and the other to pyrimidine nucleotides. The large subunit (synthetase) binds the substrates ammonia (free or transferred from glutamine from the small subunit), hydrogencarbonate and ATP and carries out an ATP-coupled ligase reaction, activating hydrogencarbonate by forming carboxy phosphate which reacts with ammonia to form carbamoyl phosphate. The sequence is that of Carbamoyl phosphate synthase large chain from Bifidobacterium adolescentis (strain ATCC 15703 / DSM 20083 / NCTC 11814 / E194a).